The following is an 859-amino-acid chain: DNA mismatch repair protein MutS (859 aa).

618–625 contacts ATP; the sequence is GPNMGGKS.

Belongs to the DNA mismatch repair MutS family.

Functionally, this protein is involved in the repair of mismatches in DNA. It is possible that it carries out the mismatch recognition step. This protein has a weak ATPase activity. This chain is DNA mismatch repair protein MutS, found in Shewanella halifaxensis (strain HAW-EB4).